A 284-amino-acid polypeptide reads, in one-letter code: Bifunctional protein FolD (284 aa).

NADP(+)-binding positions include 164 to 166 (GRG), Thr-189, and Ile-230.

This sequence belongs to the tetrahydrofolate dehydrogenase/cyclohydrolase family. Homodimer.

It carries out the reaction (6R)-5,10-methylene-5,6,7,8-tetrahydrofolate + NADP(+) = (6R)-5,10-methenyltetrahydrofolate + NADPH. The enzyme catalyses (6R)-5,10-methenyltetrahydrofolate + H2O = (6R)-10-formyltetrahydrofolate + H(+). The protein operates within one-carbon metabolism; tetrahydrofolate interconversion. Catalyzes the oxidation of 5,10-methylenetetrahydrofolate to 5,10-methenyltetrahydrofolate and then the hydrolysis of 5,10-methenyltetrahydrofolate to 10-formyltetrahydrofolate. The sequence is that of Bifunctional protein FolD from Pelotomaculum thermopropionicum (strain DSM 13744 / JCM 10971 / SI).